Reading from the N-terminus, the 347-residue chain is Ferrochelatase (347 aa).

[2Fe-2S] cluster is bound at residue Cys158. His193 and Glu272 together coordinate Fe cation. [2Fe-2S] cluster contacts are provided by Cys332, Cys339, and Cys341.

The protein belongs to the ferrochelatase family. As to quaternary structure, homodimer. [2Fe-2S] cluster is required as a cofactor.

The protein localises to the cytoplasm. The enzyme catalyses heme b + 2 H(+) = protoporphyrin IX + Fe(2+). Its pathway is porphyrin-containing compound metabolism; protoheme biosynthesis; protoheme from protoporphyrin-IX: step 1/1. Catalyzes the ferrous insertion into protoporphyrin IX. The chain is Ferrochelatase from Caulobacter vibrioides (strain ATCC 19089 / CIP 103742 / CB 15) (Caulobacter crescentus).